Reading from the N-terminus, the 181-residue chain is Inorganic pyrophosphatase 2 (181 aa).

Residues lysine 30, arginine 44, and tyrosine 56 each contribute to the substrate site. Positions 66, 71, and 103 each coordinate Mg(2+). Tyrosine 142 is a binding site for substrate.

The protein belongs to the PPase family. In terms of assembly, homohexamer. The cofactor is Mg(2+).

The protein resides in the cytoplasm. The enzyme catalyses diphosphate + H2O = 2 phosphate + H(+). Catalyzes the hydrolysis of inorganic pyrophosphate (PPi) forming two phosphate ions. The chain is Inorganic pyrophosphatase 2 from Pseudomonas syringae pv. tomato (strain ATCC BAA-871 / DC3000).